We begin with the raw amino-acid sequence, 223 residues long: Class E basic helix-loop-helix protein 23 (223 aa).

Residues 32–93 (PETTRGFGAS…GVAVDARRRP (62 aa)) form a disordered region. Positions 98 to 152 (SLRLSINARERRRMHDLNDALDGLRAVIPYAHSPSVRKLSKIATLLLAKNYILMQ) constitute a bHLH domain.

In terms of tissue distribution, expressed in brain and retina.

It is found in the nucleus. May function as transcriptional repressor. May modulate the expression of genes required for the differentiation and/or maintenance of pancreatic and neuronal cell types. May be important for rod bipolar cell maturation. The polypeptide is Class E basic helix-loop-helix protein 23 (Bhlhe23) (Mus musculus (Mouse)).